Reading from the N-terminus, the 285-residue chain is Chitinase 4 (285 aa).

The first 27 residues, M1 to A27, serve as a signal peptide directing secretion. The Chitin-binding type-1 domain maps to Q28 to G62. Disulfide bonds link C30/C38, C32/C44, C37/C51, C55/C60, C104/C153, C166/C175, and C253/C285. Residue E148 is the Proton donor of the active site.

The protein belongs to the glycosyl hydrolase 19 family. Chitinase class IV subfamily. As to expression, expressed at low levels in leaves, sheaths and meristems.

The catalysed reaction is Random endo-hydrolysis of N-acetyl-beta-D-glucosaminide (1-&gt;4)-beta-linkages in chitin and chitodextrins.. Hydrolyzes chitin and may function in reproductive organs during embryogenesis and seed maturation. The sequence is that of Chitinase 4 (Cht4) from Oryza sativa subsp. japonica (Rice).